The chain runs to 126 residues: Phosphoribosyl-AMP cyclohydrolase (126 aa).

Position 76 (Asp76) interacts with Mg(2+). Cys77 provides a ligand contact to Zn(2+). Mg(2+) contacts are provided by Asp78 and Asp80. Zn(2+) contacts are provided by Cys94 and Cys101.

It belongs to the PRA-CH family. Homodimer. Requires Mg(2+) as cofactor. Zn(2+) serves as cofactor.

Its subcellular location is the cytoplasm. It catalyses the reaction 1-(5-phospho-beta-D-ribosyl)-5'-AMP + H2O = 1-(5-phospho-beta-D-ribosyl)-5-[(5-phospho-beta-D-ribosylamino)methylideneamino]imidazole-4-carboxamide. It participates in amino-acid biosynthesis; L-histidine biosynthesis; L-histidine from 5-phospho-alpha-D-ribose 1-diphosphate: step 3/9. Its function is as follows. Catalyzes the hydrolysis of the adenine ring of phosphoribosyl-AMP. The protein is Phosphoribosyl-AMP cyclohydrolase of Nitratidesulfovibrio vulgaris (strain ATCC 29579 / DSM 644 / CCUG 34227 / NCIMB 8303 / VKM B-1760 / Hildenborough) (Desulfovibrio vulgaris).